The primary structure comprises 501 residues: MDAKKGSGEPEFFSEYGDASRYEVTEVVGKGSYGVVAAAVDTHTGGRVAIKKINDVFEHISDATRILREIKLLRLLRHPDIVEIKHIMLPPSRREFRDIYIIFELMESDLHQVIKANDDLTPEHHQFFLYQLLRGMKYIHAASVFHRDLKPKNILANADCKVKICDFGLARVSFDDTPSAIFWTDYVATRWYRAPELCGSFFSKYTPAIDIWSVGCIFAEMLMGKPLFPGKNVVHQLDLMTDLLGSPSGETISRIRNEKARRYLGNMRKKPRVPFSQKFPGADPMALHLLERLLAFDPKDRPTAAEALTDPYFTGLANSEREPIAQPISKLEFEFERRKLAKDDVRELIYREILEYHPQMMQKYLRGGDQSNFLYPSGVDRFKRQFAHLEEGVAQGDKTSPQLRQHVSLPRERVVRNGDEPDPTADYCIKLHVGEQPGHSSVTDGLNKPLLSARNFLKSESIGASQCVVIKEKREKDEESMSEYMNEAADGVPHKIAQLKT.

In terms of domain architecture, Protein kinase spans 22–313 (YEVTEVVGKG…AAEALTDPYF (292 aa)). ATP is bound by residues 28 to 36 (VGKGSYGVV) and Lys51. Catalysis depends on Asp148, which acts as the Proton acceptor. Thr184 bears the Phosphothreonine mark. Positions 184 to 186 (TDY) match the TXY motif. Residue Tyr186 is modified to Phosphotyrosine. Positions 477-501 (DEESMSEYMNEAADGVPHKIAQLKT) are disordered.

Belongs to the protein kinase superfamily. CMGC Ser/Thr protein kinase family. MAP kinase subfamily. In terms of processing, dually phosphorylated on Thr-184 and Tyr-186, which activates the enzyme.

The enzyme catalyses L-seryl-[protein] + ATP = O-phospho-L-seryl-[protein] + ADP + H(+). The catalysed reaction is L-threonyl-[protein] + ATP = O-phospho-L-threonyl-[protein] + ADP + H(+). With respect to regulation, activated by threonine and tyrosine phosphorylation. This chain is Mitogen-activated protein kinase 16 (MPK16), found in Oryza sativa subsp. japonica (Rice).